Consider the following 432-residue polypeptide: Trigger factor (432 aa).

One can recognise a PPIase FKBP-type domain in the interval 161 to 246 (GKRVSIDFVG…VNKVEARQLP (86 aa)).

It belongs to the FKBP-type PPIase family. Tig subfamily.

It localises to the cytoplasm. It carries out the reaction [protein]-peptidylproline (omega=180) = [protein]-peptidylproline (omega=0). Involved in protein export. Acts as a chaperone by maintaining the newly synthesized protein in an open conformation. Functions as a peptidyl-prolyl cis-trans isomerase. This Vibrio vulnificus (strain YJ016) protein is Trigger factor.